A 784-amino-acid chain; its full sequence is Spindle pole body component alp4 (784 aa).

The protein belongs to the TUBGCP family. In terms of assembly, part of the gamma-tubulin complex. Interacts with mcp6. Interacts with mto1. Interacts with mto2.

The protein localises to the cytoplasm. Its subcellular location is the cytoskeleton. It localises to the microtubule organizing center. It is found in the spindle pole body. Its function is as follows. Component of the gamma tubule complex that is required for the regulation of both interphase microtubules and mitotic bipolar spindles. The polypeptide is Spindle pole body component alp4 (alp4) (Schizosaccharomyces pombe (strain 972 / ATCC 24843) (Fission yeast)).